A 128-amino-acid chain; its full sequence is Large ribosomal subunit protein uL22 (128 aa).

This sequence belongs to the universal ribosomal protein uL22 family. Part of the 50S ribosomal subunit.

Functionally, this protein binds specifically to 23S rRNA; its binding is stimulated by other ribosomal proteins, e.g. L4, L17, and L20. It is important during the early stages of 50S assembly. It makes multiple contacts with different domains of the 23S rRNA in the assembled 50S subunit and ribosome. Its function is as follows. The globular domain of the protein is located near the polypeptide exit tunnel on the outside of the subunit, while an extended beta-hairpin is found that lines the wall of the exit tunnel in the center of the 70S ribosome. The chain is Large ribosomal subunit protein uL22 from Rhodopseudomonas palustris (strain HaA2).